Reading from the N-terminus, the 338-residue chain is Nicotinate-nucleotide--dimethylbenzimidazole phosphoribosyltransferase (338 aa).

Glu305 functions as the Proton acceptor in the catalytic mechanism.

It belongs to the CobT family.

It catalyses the reaction 5,6-dimethylbenzimidazole + nicotinate beta-D-ribonucleotide = alpha-ribazole 5'-phosphate + nicotinate + H(+). Its pathway is nucleoside biosynthesis; alpha-ribazole biosynthesis; alpha-ribazole from 5,6-dimethylbenzimidazole: step 1/2. Its function is as follows. Catalyzes the synthesis of alpha-ribazole-5'-phosphate from nicotinate mononucleotide (NAMN) and 5,6-dimethylbenzimidazole (DMB). The chain is Nicotinate-nucleotide--dimethylbenzimidazole phosphoribosyltransferase from Rhizobium johnstonii (strain DSM 114642 / LMG 32736 / 3841) (Rhizobium leguminosarum bv. viciae).